A 699-amino-acid polypeptide reads, in one-letter code: SPS-sensor serine protease component SSY5 (699 aa).

2 disordered regions span residues 1–113 (MVRF…LQGF) and 129–158 (VKEE…GNAR). The propeptide occupies 1 to 381 (MVRFFGLNKK…YCVKDYIKKA (381 aa)). The span at 24–38 (NEQNAAETSSSNVSG) shows a compositional bias: polar residues. The segment covering 39-51 (NEERIDPNSHDAN) has biased composition (basic and acidic residues). Low complexity predominate over residues 52–78 (PENANNDDASTTFGSSIQSSSIFSRGR). Positions 83-93 (TGASSSMATSE) are enriched in polar residues. Composition is skewed to low complexity over residues 97–109 (HSSG…NSKN) and 144–154 (SSSTSSTLATS). A serine protease region spans residues 459–699 (FAITCAHVVL…QWDIDPQLDG (241 aa)). Active-site charge relay system residues include H465, D545, and S640.

It belongs to the peptidase S64 family. In terms of assembly, component of the plasma membrane SPS (SSY1-PTR3-SSY5) amino acid sensor complex. The propeptide is autoproteolytically cleaved from the catalytic domain but remains associated, forming an inactive protease complex. This processing occurs even in the absence of signaling.

Its subcellular location is the cell membrane. Its function is as follows. Protease component of the SPS-sensor system, which regulates the expression of several amino acid-metabolizing enzymes and amino acid- and peptide-permeases in response to extracellular amino acid levels by controlling the activity of two transcription factors, STP1 and STP2. Catalyzes the activation of these transcription factors, which are synthesized as latent cytoplasmic precursors, by proteolytic removal of an N-terminal inhibitory domain containing cytoplasmic retention motifs. SSY5 binds as an inactive protease complex to STP1. In response to extracellular amino acids and dependent on the other SPS-sensor components, the inhibitory propeptide is induced to dissociate, and thereby enables the catalytic domain to process STP1. The protein is SPS-sensor serine protease component SSY5 (SSY5) of Saccharomyces cerevisiae (strain YJM789) (Baker's yeast).